A 215-amino-acid polypeptide reads, in one-letter code: Probable transaldolase (215 aa).

Lysine 83 serves as the catalytic Schiff-base intermediate with substrate.

Belongs to the transaldolase family. Type 3B subfamily.

The protein localises to the cytoplasm. It carries out the reaction D-sedoheptulose 7-phosphate + D-glyceraldehyde 3-phosphate = D-erythrose 4-phosphate + beta-D-fructose 6-phosphate. Its pathway is carbohydrate degradation; pentose phosphate pathway; D-glyceraldehyde 3-phosphate and beta-D-fructose 6-phosphate from D-ribose 5-phosphate and D-xylulose 5-phosphate (non-oxidative stage): step 2/3. In terms of biological role, transaldolase is important for the balance of metabolites in the pentose-phosphate pathway. This is Probable transaldolase from Clostridium perfringens (strain ATCC 13124 / DSM 756 / JCM 1290 / NCIMB 6125 / NCTC 8237 / Type A).